A 345-amino-acid polypeptide reads, in one-letter code: Succinylglutamate desuccinylase (345 aa).

Residues His-63, Glu-66, and His-160 each contribute to the Zn(2+) site. Glu-224 is a catalytic residue.

It belongs to the AspA/AstE family. Succinylglutamate desuccinylase subfamily. The cofactor is Zn(2+).

The catalysed reaction is N-succinyl-L-glutamate + H2O = L-glutamate + succinate. It functions in the pathway amino-acid degradation; L-arginine degradation via AST pathway; L-glutamate and succinate from L-arginine: step 5/5. Its function is as follows. Transforms N(2)-succinylglutamate into succinate and glutamate. The sequence is that of Succinylglutamate desuccinylase from Shewanella woodyi (strain ATCC 51908 / MS32).